The sequence spans 164 residues: MNPRRQKRLIVISAIVLVIGAAIGLMLYALSQNIDLFYTPSEVIDGKQIGQVTEVPQVGQRLRIGGMVVPGSVKRDNESLAVSFDLIDTGPIVTVSYQGLLPDLFREGQGIVATGVLTAENHIEAHEVLAKHDEEYMPPELAEKMKGIKHVKPEQAYSTPKVSG.

At 1–8 (MNPRRQKR) the chain is on the cytoplasmic side. A helical; Signal-anchor for type II membrane protein membrane pass occupies residues 9 to 29 (LIVISAIVLVIGAAIGLMLYA). Residues 30 to 164 (LSQNIDLFYT…QAYSTPKVSG (135 aa)) are Periplasmic-facing. 2 residues coordinate heme: His132 and Tyr136.

Belongs to the CcmE/CycJ family.

It localises to the cell inner membrane. Heme chaperone required for the biogenesis of c-type cytochromes. Transiently binds heme delivered by CcmC and transfers the heme to apo-cytochromes in a process facilitated by CcmF and CcmH. In Pseudoalteromonas atlantica (strain T6c / ATCC BAA-1087), this protein is Cytochrome c-type biogenesis protein CcmE.